We begin with the raw amino-acid sequence, 509 residues long: Maturase K (509 aa).

This sequence belongs to the intron maturase 2 family. MatK subfamily.

It localises to the plastid. Its subcellular location is the chloroplast. Functionally, usually encoded in the trnK tRNA gene intron. Probably assists in splicing its own and other chloroplast group II introns. In Clematis vitalba (Evergreen clematis), this protein is Maturase K.